Reading from the N-terminus, the 173-residue chain is Ribosome maturation factor RimM (173 aa).

The 72-residue stretch at 102–173 (EGEYYWSDLI…TMLVDWDPEF (72 aa)) folds into the PRC barrel domain.

This sequence belongs to the RimM family. In terms of assembly, binds ribosomal protein uS19.

It is found in the cytoplasm. Functionally, an accessory protein needed during the final step in the assembly of 30S ribosomal subunit, possibly for assembly of the head region. Essential for efficient processing of 16S rRNA. May be needed both before and after RbfA during the maturation of 16S rRNA. It has affinity for free ribosomal 30S subunits but not for 70S ribosomes. The sequence is that of Ribosome maturation factor RimM from Methylobacillus flagellatus (strain ATCC 51484 / DSM 6875 / VKM B-1610 / KT).